Here is a 278-residue protein sequence, read N- to C-terminus: Octanoyl-[GcvH]:protein N-octanoyltransferase (278 aa).

Residues 41–247 enclose the BPL/LPL catalytic domain; the sequence is LVSPPTIRTW…LLHRLAGEVH (207 aa). Cys146 functions as the Acyl-thioester intermediate in the catalytic mechanism.

It belongs to the octanoyltransferase LipL family.

The enzyme catalyses N(6)-octanoyl-L-lysyl-[glycine-cleavage complex H protein] + L-lysyl-[lipoyl-carrier protein] = N(6)-octanoyl-L-lysyl-[lipoyl-carrier protein] + L-lysyl-[glycine-cleavage complex H protein]. Its pathway is protein modification; protein lipoylation via endogenous pathway; protein N(6)-(lipoyl)lysine from octanoyl-[acyl-carrier-protein]. Its function is as follows. Catalyzes the amidotransfer (transamidation) of the octanoyl moiety from octanoyl-GcvH to the lipoyl domain of the E2 subunit of lipoate-dependent enzymes. The polypeptide is Octanoyl-[GcvH]:protein N-octanoyltransferase (Lysinibacillus sphaericus (strain C3-41)).